We begin with the raw amino-acid sequence, 311 residues long: MALPILLDCDPGHDDAIAIVLALASPELDVKAITSSAGNQTPEKTLRNVLRMLTLLNRTDIPVASGAVKPLMRDLIIADNVHGESGLDGPALPEPTFAPQNCTAVELMAKTLRESAEPVTIVSTGPQTNVALLLNSHPELHSKIARIVIMGGAMGLGNWTPAAEFNIYVDPEAAEIVFQSGIPVVMAGLDVTHKAQIHVEDTERFRAIGNPVSTIVAELLDFFLEYHKDEKWGFVGAPLHDPCTIAWLLKPELFTTVERWVGVETQGKYTQGMTVVDYYYLTGNKPNATVMVDVDRQGFVDLLAERLKFYA.

The active site involves His240.

This sequence belongs to the IUNH family. RihA subfamily.

Hydrolyzes with equal efficiency cytidine or uridine to ribose and cytosine or uracil, respectively. The protein is Pyrimidine-specific ribonucleoside hydrolase RihA of Escherichia coli O7:K1 (strain IAI39 / ExPEC).